Reading from the N-terminus, the 654-residue chain is Chaperone protein HtpG (654 aa).

The interval 1–344 (MTVENAPQRE…SDDLPLNVSR (344 aa)) is a; substrate-binding. The b stretch occupies residues 345–556 (ELLQDSQVVR…EGGSPAYLER (212 aa)). The c stretch occupies residues 557 to 654 (LLQQRGRGAG…AQTPASATAS (98 aa)).

It belongs to the heat shock protein 90 family. In terms of assembly, homodimer.

Its subcellular location is the cytoplasm. Functionally, molecular chaperone. Has ATPase activity. The polypeptide is Chaperone protein HtpG (Myxococcus xanthus (strain DK1622)).